The chain runs to 2025 residues: E3 ubiquitin-protein ligase TRIP12 (2025 aa).

A compositionally biased stretch (polar residues) spans 1-10 (MSNRPNNNPG). Positions 1 to 404 (MSNRPNNNPG…SGESESDDSE (404 aa)) are disordered. S2 bears the N-acetylserine mark. S12 is subject to Phosphoserine. Polar residues predominate over residues 18-27 (RNTAGAQPQD). Residues 48–70 (DPDRANTSERQKTGQVPKKDNSR) show a composition bias toward basic and acidic residues. Residues S77, S85, and S100 each carry the phosphoserine modification. Polar residues-rich tracts occupy residues 78–88 (PDYNRTNSPSS), 99–108 (ESLSETNKPP), and 119–132 (EQQL…STSK). 2 stretches are compositionally biased toward low complexity: residues 154–166 (SSCV…SEST) and 175–216 (PTKL…SSTV). K181 carries the post-translational modification N6-acetyllysine. A compositionally biased stretch (polar residues) spans 280 to 290 (PGSSKSETSKP). 2 positions are modified to phosphoserine: S310 and S312. Over residues 326–338 (QKTTGSCASTSRR) the composition is skewed to polar residues. Basic and acidic residues predominate over residues 346–358 (GAAEARRQEKMAD). The span at 362–371 (NQETVNSSAA) shows a compositional bias: polar residues. Low complexity predominate over residues 379-397 (GAAASSSVAGAVGMTTSGE). Positions 755-869 (MLKKGNAQNT…DPELAKSFIK (115 aa)) constitute a WWE domain. Positions 970–1077 (ESLLTSPPKA…QSPKSSFLAS (108 aa)) are disordered. The residue at position 975 (S975) is a Phosphoserine. Low complexity predominate over residues 983-1006 (GSGSLGSTTPASSGTATAATNASA). 2 positions are modified to phosphoserine: S1024 and S1030. The span at 1034–1047 (KRKRLPKRGPRRPK) shows a compositional bias: basic residues. Position 1049 is a phosphoserine (S1049). The segment covering 1050–1059 (PPRDDDKVDN) has biased composition (basic and acidic residues). Low complexity predominate over residues 1062-1073 (KSPTTTQSPKSS). Phosphoserine occurs at positions 1063, 1350, 1355, 1362, and 1409. Residue T1410 is modified to Phosphothreonine. Disordered stretches follow at residues 1440-1466 (SSKD…NAKK) and 1601-1620 (TNPE…PRLD). K1458 carries the N6-acetyllysine modification. Residue S1460 is modified to Phosphoserine. The tract at residues 1529–1603 (EIIPTSEFIN…AMQRLLDTNP (75 aa)) is K-box. Residues 1918–2025 (PDHGYTHDSR…REGQQSFHLS (108 aa)) form the HECT domain. Residue C1992 is the Glycyl thioester intermediate of the active site.

Belongs to the UPL family. K-HECT subfamily. Interacts with MYC; leading to disrupt interaction with isoform p19ARF/ARF of CDKN2A. Interacts with TRADD; leading to disrupt interaction with isoform p19ARF/ARF of CDKN2A. Interacts with SMARCC1; leading to disrupt interaction with SMARCE1.

The protein localises to the nucleus. Its subcellular location is the nucleoplasm. It carries out the reaction S-ubiquitinyl-[E2 ubiquitin-conjugating enzyme]-L-cysteine + [acceptor protein]-L-lysine = [E2 ubiquitin-conjugating enzyme]-L-cysteine + N(6)-ubiquitinyl-[acceptor protein]-L-lysine.. Its pathway is protein modification; protein ubiquitination. Functionally, E3 ubiquitin-protein ligase involved in ubiquitin fusion degradation (UFD) pathway and regulation of DNA repair. Part of the ubiquitin fusion degradation (UFD) pathway, a process that mediates ubiquitination of protein at their N-terminus, regardless of the presence of lysine residues in target proteins. Acts as a key regulator of DNA damage response by acting as a suppressor of RNF168, an E3 ubiquitin-protein ligase that promotes accumulation of 'Lys-63'-linked histone H2A and H2AX at DNA damage sites, thereby acting as a guard against excessive spreading of ubiquitinated chromatin at damaged chromosomes. In normal cells, mediates ubiquitination and degradation of isoform p19ARF/ARF of CDKN2A, a lysine-less tumor suppressor required for p53/TP53 activation under oncogenic stress. In cancer cells, however, isoform p19ARF/ARF and TRIP12 are located in different cell compartments, preventing isoform p19ARF/ARF ubiquitination and degradation. Does not mediate ubiquitination of isoform p16-INK4a of CDKN2A. Also catalyzes ubiquitination of NAE1 and SMARCE1, leading to their degradation. Ubiquitination and degradation of target proteins is regulated by interaction with proteins such as MYC, TRADD or SMARCC1, which disrupt the interaction between TRIP12 and target proteins. Mediates ubiquitination of ASXL1: following binding to N(6)-methyladenosine methylated DNA, ASXL1 is ubiquitinated by TRIP12, leading to its degradation and subsequent inactivation of the PR-DUB complex. This is E3 ubiquitin-protein ligase TRIP12 (Trip12) from Rattus norvegicus (Rat).